Consider the following 320-residue polypeptide: Cytochrome f (320 aa).

A signal peptide spans 1-35 (MQTRNAFSCIKEGITRSISISVMIYIIIRAPFSNA). Heme contacts are provided by Y36, C56, C59, and H60. A helical transmembrane segment spans residues 286–306 (VQGLLFFLASIILAQIFLVLK).

Belongs to the cytochrome f family. As to quaternary structure, the 4 large subunits of the cytochrome b6-f complex are cytochrome b6, subunit IV (17 kDa polypeptide, petD), cytochrome f and the Rieske protein, while the 4 small subunits are PetG, PetL, PetM and PetN. The complex functions as a dimer. The cofactor is heme.

It localises to the plastid. The protein localises to the chloroplast thylakoid membrane. Functionally, component of the cytochrome b6-f complex, which mediates electron transfer between photosystem II (PSII) and photosystem I (PSI), cyclic electron flow around PSI, and state transitions. In Phaseolus vulgaris (Kidney bean), this protein is Cytochrome f.